The chain runs to 695 residues: MTTHGWGTRILLGAALAALTLLGGCNDADSGERNRLPGFVSGSVRTTAYDGTSDDLLTAGLGKTGLASTAPAFANPSRPTSAELRRLAIWSNYRALVDMSANGGYGRFWGPNVDLDGNATLGEGKIPGTEYLAYSDDGSGRKNVTLLVQVPASFDPKQPCIVTATSSGSRGVYGAISAAGEWGLKRGCAVAYNDKGGGNGAHELGSDTITLIDGTLANAVLAGNASLFTANVTSGDLAAFNGRFPNRYAFKHAHSQQNPEQDWGHATLQAVEFAYWALNEQFGPVLDSSHHGVRYHPGDITTIAASVSNGGGAALAAAEQDTRRWITAVVVGEPQVNVRMSPNAIVREGGQPAPSFGRPLADYATLANLLQPCAAASASLAGEPYLSGLPAATTQSIRTQRCATLAAAGLVSGADTQSQAADALAQLHAAGYLADSDLLQASMWDSQAIPAIAVTYANAYTRSRVTDNLCNFSFATTSAPTGTVASPAASPMPAIFGVGNGVPPTGGIDLVFNTGAGVDHRLATPDASFAGALCLRQLWTNGMLDMPANVDAVRVNANLQGKPAIIVQGRSDALVPVNHASRAYVAQNSISEGARSQLVFYEVTNGQHFDAFLPVAGFDTRFVPVHYYNVQALNLMWRHLKNGAALPPSQVIRTVPRGGTPGAAPALTSANLPPIATSPGANAITAGAGAIDVPL.

The N-terminal stretch at 1–17 is a signal peptide; it reads MTTHGWGTRILLGAALA. The Charge relay system role is filled by S308.

Belongs to the D-(-)-3-hydroxybutyrate oligomer hydrolase family.

The protein resides in the secreted. It catalyses the reaction (3R)-hydroxybutanoate dimer + H2O = 2 (R)-3-hydroxybutanoate + H(+). Its pathway is lipid metabolism; butanoate metabolism. In terms of biological role, participates in the degradation of poly-3-hydroxybutyrate (PHB). It works downstream of poly(3-hydroxybutyrate) depolymerase, hydrolyzing D(-)-3-hydroxybutyrate oligomers of various length (3HB-oligomers) into 3HB-monomers. The protein is D-(-)-3-hydroxybutyrate oligomer hydrolase of Burkholderia ambifaria (strain ATCC BAA-244 / DSM 16087 / CCUG 44356 / LMG 19182 / AMMD) (Burkholderia cepacia (strain AMMD)).